A 312-amino-acid chain; its full sequence is Pantothenate synthetase (312 aa).

Position 42-49 (42-49 (MGALHTGH)) interacts with ATP. H49 serves as the catalytic Proton donor. Residue Q73 coordinates (R)-pantoate. Q73 is a binding site for beta-alanine. 159-162 (GEKD) serves as a coordination point for ATP. Q165 lines the (R)-pantoate pocket. ATP contacts are provided by residues V188 and 196–199 (LSSR).

Belongs to the pantothenate synthetase family. As to quaternary structure, homodimer.

It localises to the cytoplasm. It carries out the reaction (R)-pantoate + beta-alanine + ATP = (R)-pantothenate + AMP + diphosphate + H(+). It participates in cofactor biosynthesis; (R)-pantothenate biosynthesis; (R)-pantothenate from (R)-pantoate and beta-alanine: step 1/1. Catalyzes the condensation of pantoate with beta-alanine in an ATP-dependent reaction via a pantoyl-adenylate intermediate. The protein is Pantothenate synthetase of Rhodococcus jostii (strain RHA1).